The chain runs to 159 residues: Nascent polypeptide-associated complex subunit beta (159 aa).

Disordered regions lie at residues 1–39 (MDMEKLKRMQARGGVRTGDGKGTPRRKVKNVHKSTGMDD) and 121–159 (ESYQSMQKAEGGEDKKDDDEDDDDIPDLVEGENFEDKVE). Residues 23-32 (TPRRKVKNVH) show a composition bias toward basic residues. The NAC-A/B domain maps to 36-101 (GMDDKKLQTS…GEDKELTELV (66 aa)). Over residues 136 to 153 (KDDDEDDDDIPDLVEGEN) the composition is skewed to acidic residues.

The protein belongs to the NAC-beta family. As to quaternary structure, part of the nascent polypeptide-associated complex (NAC), consisting of EGD2 and EGD1. NAC associates with ribosomes via EGD1.

It localises to the cytoplasm. It is found in the nucleus. Component of the nascent polypeptide-associated complex (NAC), a dynamic component of the ribosomal exit tunnel, protecting the emerging polypeptides from interaction with other cytoplasmic proteins to ensure appropriate nascent protein targeting. The NAC complex also promotes mitochondrial protein import by enhancing productive ribosome interactions with the outer mitochondrial membrane and blocks the inappropriate interaction of ribosomes translating non-secretory nascent polypeptides with translocation sites in the membrane of the endoplasmic reticulum. EGD1 may act as a transcription factor that exert a negative effect on the expression of several genes that are transcribed by RNA polymerase II. The protein is Nascent polypeptide-associated complex subunit beta (egd1) of Botryotinia fuckeliana (strain B05.10) (Noble rot fungus).